Consider the following 238-residue polypeptide: uncharacterized protein (238 aa).

The 68-residue stretch at 1–68 (MIYKSIAERL…HGSGTYLVRK (68 aa)) folds into the HTH gntR-type domain. The H-T-H motif DNA-binding region spans 28–47 (EKKLAEEFAVSRMTIRKAID).

This is an uncharacterized protein from Escherichia coli (strain K12).